The sequence spans 165 residues: uncharacterized protein (165 aa).

This is an uncharacterized protein from Aquifex aeolicus (strain VF5).